A 90-amino-acid chain; its full sequence is DNA-directed RNA polymerase subunit omega (90 aa).

Residues 69–90 (RQEQQEQDAAELAAVSSITHNR) form a disordered region.

It belongs to the RNA polymerase subunit omega family. In terms of assembly, the RNAP catalytic core consists of 2 alpha, 1 beta, 1 beta' and 1 omega subunit. When a sigma factor is associated with the core the holoenzyme is formed, which can initiate transcription.

The catalysed reaction is RNA(n) + a ribonucleoside 5'-triphosphate = RNA(n+1) + diphosphate. Promotes RNA polymerase assembly. Latches the N- and C-terminal regions of the beta' subunit thereby facilitating its interaction with the beta and alpha subunits. This is DNA-directed RNA polymerase subunit omega from Aliivibrio fischeri (strain ATCC 700601 / ES114) (Vibrio fischeri).